A 746-amino-acid chain; its full sequence is Protein C-mannosyl-transferase DPY19L1 (746 aa).

The disordered stretch occupies residues 1-68 (MVLQARSKHR…RAETAAPAPD (68 aa)). Over residues 14–27 (PRPPRPARSSPPPL) the composition is skewed to pro residues. The next 12 helical transmembrane spans lie at 93–113 (STLL…TQLF), 139–159 (YSYF…WMIM), 227–247 (ACFY…LFFI), 248–268 (YGTY…CFFF), 308–328 (YRGS…PWQF), 329–349 (AQFV…VGYI), 357–377 (IIYT…GNSM), 378–398 (LLTS…AMKP), 405–425 (VSEL…TVTL), 481–501 (LLLP…INDM), 520–540 (GELV…ILIM), and 562–582 (LFGW…VLAA).

This sequence belongs to the dpy-19 family.

Its subcellular location is the endoplasmic reticulum membrane. It carries out the reaction L-tryptophyl-[protein] + a di-trans,poly-cis-dolichyl beta-D-mannosyl phosphate = C-alpha-D-mannosyl-L-tryptophyl-[protein] + a di-trans,poly-cis-dolichyl phosphate + H(+). The protein operates within protein modification; protein glycosylation. Functionally, C-mannosyltransferase that mediates the C-mannosylation tryptophan residues on target proteins. The reaction occurs on the luminal side of the endoplasmic reticulum and involves the transfer of a mannose unit from a dolichylphosphate mannose (Dol-P-Man) donor to an acceptor protein containing a WxxW consensus sequence. C-mannosylates the first two tryptophans in the WxxWxxWxxC sequence motif in thrombospondin (TSP) type-1 repeats of UNC5A. Regulates neurite extension during development. The polypeptide is Protein C-mannosyl-transferase DPY19L1 (Dpy19l1) (Rattus norvegicus (Rat)).